The chain runs to 361 residues: Aminomethyltransferase (361 aa).

Belongs to the GcvT family. As to quaternary structure, the glycine cleavage system is composed of four proteins: P, T, L and H.

The enzyme catalyses N(6)-[(R)-S(8)-aminomethyldihydrolipoyl]-L-lysyl-[protein] + (6S)-5,6,7,8-tetrahydrofolate = N(6)-[(R)-dihydrolipoyl]-L-lysyl-[protein] + (6R)-5,10-methylene-5,6,7,8-tetrahydrofolate + NH4(+). Functionally, the glycine cleavage system catalyzes the degradation of glycine. The protein is Aminomethyltransferase of Bacteroides thetaiotaomicron (strain ATCC 29148 / DSM 2079 / JCM 5827 / CCUG 10774 / NCTC 10582 / VPI-5482 / E50).